We begin with the raw amino-acid sequence, 508 residues long: CBL-interacting protein kinase 19 (508 aa).

A disordered region spans residues 1–24 (MAATPPSSQHRRPLSSSASAASLA). Positions 14-24 (LSSSASAASLA) are enriched in low complexity. The Protein kinase domain maps to 37–291 (YELGRLLGHG…VKEVMESRWF (255 aa)). Residues 43 to 51 (LGHGTFAKV) and K66 each bind ATP. D159 acts as the Proton acceptor in catalysis. The interval 177–206 (DFGLSAVADQFHPDGLLHTFCGTPSYVAPE) is activation loop. Residues 311–372 (ADGDNDMPEL…EERRQRPLGS (62 aa)) form a disordered region. A compositionally biased stretch (acidic residues) spans 313–322 (GDNDMPELEP). The span at 323–337 (SEPPPPPPFPPPPPQ) shows a compositional bias: pro residues. Positions 338 to 347 (QDDDGEESGW) are enriched in acidic residues. An NAF domain is found at 354-398 (ASCPATLSSEERRQRPLGSLTRPASLNAFDIISFSKGFDLSGLFE). A PPI region spans residues 401–430 (GSEVRFISAEPMQTIITKLEEIAKVKSFFV).

The protein belongs to the protein kinase superfamily. CAMK Ser/Thr protein kinase family. SNF1 subfamily. The cofactor is Mn(2+). Autophosphorylated. As to expression, expressed in roots, leaf blades and sheaths and panicles.

It carries out the reaction L-seryl-[protein] + ATP = O-phospho-L-seryl-[protein] + ADP + H(+). The enzyme catalyses L-threonyl-[protein] + ATP = O-phospho-L-threonyl-[protein] + ADP + H(+). Functionally, CIPK serine-threonine protein kinases interact with CBL proteins. Binding of a CBL protein to the regulatory NAF domain of CIPK protein lead to the activation of the kinase in a calcium-dependent manner. The chain is CBL-interacting protein kinase 19 (CIPK19) from Oryza sativa subsp. japonica (Rice).